We begin with the raw amino-acid sequence, 562 residues long: Nucleoprotein (562 aa).

The segment at 54–237 (LRKTKRTDGD…ITKDESAINI (184 aa)) is binding site for the cap structure m7GTP. Mn(2+) contacts are provided by aspartate 381 and glutamate 383. Residues glutamate 391, cysteine 498, histidine 501, and cysteine 523 each coordinate Zn(2+). Aspartate 527 provides a ligand contact to Mn(2+).

The protein belongs to the arenaviridae nucleocapsid protein family. As to quaternary structure, homomultimerizes to form the nucleocapsid. Binds to viral genomic RNA. Interacts with glycoprotein G2. Interacts with protein Z; this interaction probably directs the encapsidated genome to budding sites. Interacts with protein L; this interaction does not interfere with Z-L interaction. Interacts with host IKBKE (via Protein kinase domain); the interaction inhibits IKBKE kinase activity.

The protein resides in the virion. The protein localises to the host cytoplasm. In terms of biological role, encapsidates the genome, protecting it from nucleases. The encapsidated genomic RNA is termed the nucleocapsid (NC). Serves as template for viral transcription and replication. The increased presence of protein N in host cell does not seem to trigger the switch from transcription to replication as observed in other negative strain RNA viruses. Through the interaction with host IKBKE, strongly inhibits the phosphorylation and nuclear translocation of host IRF3, a protein involved in interferon activation pathway, leading to the inhibition of interferon-beta and IRF3-dependent promoters activation. Also encodes a functional 3'-5' exoribonuclease that degrades preferentially dsRNA substrates and thereby participates in the suppression of interferon induction. The polypeptide is Nucleoprotein (Homo sapiens (Human)).